The following is a 179-amino-acid chain: NEDD8-conjugating enzyme UBC12 (179 aa).

Residues 24–168 enclose the UBC core domain; the sequence is AAQLRVQKDL…VKHSMAGGSV (145 aa). Catalysis depends on Cys106, which acts as the Glycyl thioester intermediate.

The protein belongs to the ubiquitin-conjugating enzyme family. UBC12 subfamily.

The catalysed reaction is [E1 NEDD8-activating enzyme]-S-[NEDD8 protein]-yl-L-cysteine + [E2 NEDD8-conjugating enzyme]-L-cysteine = [E1 NEDD8-activating enzyme]-L-cysteine + [E2 NEDD8-conjugating enzyme]-S-[NEDD8-protein]-yl-L-cysteine.. It participates in protein modification; protein neddylation. Functionally, accepts the ubiquitin-like protein NEDD8/RUB1 from the UBA3-ULA1 E1 complex and catalyzes its covalent attachment to other proteins. In Yarrowia lipolytica (strain CLIB 122 / E 150) (Yeast), this protein is NEDD8-conjugating enzyme UBC12 (UBC12).